A 66-amino-acid chain; its full sequence is DNA-directed RNA polymerase subunit Rpo10 (66 aa).

Residues cysteine 7, cysteine 10, cysteine 44, and cysteine 45 each contribute to the Zn(2+) site.

It belongs to the archaeal Rpo10/eukaryotic RPB10 RNA polymerase subunit family. In terms of assembly, part of the RNA polymerase complex. Zn(2+) is required as a cofactor.

The protein resides in the cytoplasm. The catalysed reaction is RNA(n) + a ribonucleoside 5'-triphosphate = RNA(n+1) + diphosphate. Its function is as follows. DNA-dependent RNA polymerase (RNAP) catalyzes the transcription of DNA into RNA using the four ribonucleoside triphosphates as substrates. This is DNA-directed RNA polymerase subunit Rpo10 from Staphylothermus marinus (strain ATCC 43588 / DSM 3639 / JCM 9404 / F1).